Consider the following 252-residue polypeptide: Ribose-5-phosphate isomerase (252 aa).

This sequence belongs to the ribose 5-phosphate isomerase family.

It is found in the cytoplasm. The enzyme catalyses aldehydo-D-ribose 5-phosphate = D-ribulose 5-phosphate. Its pathway is carbohydrate degradation; pentose phosphate pathway; D-ribose 5-phosphate from D-ribulose 5-phosphate (non-oxidative stage): step 1/1. The polypeptide is Ribose-5-phosphate isomerase (RKI1) (Debaryomyces hansenii (strain ATCC 36239 / CBS 767 / BCRC 21394 / JCM 1990 / NBRC 0083 / IGC 2968) (Yeast)).